A 366-amino-acid chain; its full sequence is D-alanine--D-alanine ligase (366 aa).

The 204-residue stretch at 150–353 (KRVLRDAGVP…YPALVDRLIV (204 aa)) folds into the ATP-grasp domain. 180 to 235 (IGQLGLPLFIKPASQGSSVGVSKVTDRAGFAAALALAFRYDAKVLVEQGISGREIE) provides a ligand contact to ATP. Residues aspartate 307, glutamate 320, and asparagine 322 each coordinate Mg(2+).

The protein belongs to the D-alanine--D-alanine ligase family. Mg(2+) serves as cofactor. The cofactor is Mn(2+).

It localises to the cytoplasm. It carries out the reaction 2 D-alanine + ATP = D-alanyl-D-alanine + ADP + phosphate + H(+). The protein operates within cell wall biogenesis; peptidoglycan biosynthesis. Its function is as follows. Cell wall formation. In Sodalis glossinidius (strain morsitans), this protein is D-alanine--D-alanine ligase.